Consider the following 308-residue polypeptide: Barttin (308 aa).

Residues 1 to 5 (MADEK) are Cytoplasmic-facing. The regulates channel membrane trafficking and anion conductance stretch occupies residues 1–72 (MADEKTFRIG…VPADSDFQGM (72 aa)). Residues 6–26 (TFRIGFIVLGLFLLSLGTFLM) form a helical membrane-spanning segment. At 27 to 32 (SHDRPQ) the chain is on the extracellular side. A helical membrane pass occupies residues 33–53 (VYGTFYAMGSIMVIGGVLWSM). Residues C54 and C56 are each lipidated (S-palmitoyl cysteine). Topologically, residues 54-308 (CQCYPKITFV…ELGFEPDVQG (255 aa)) are cytoplasmic. A phosphoserine mark is found at S79 and S107. 2 disordered regions span residues 127 to 149 (PLLA…HSAQ) and 162 to 308 (LDEK…DVQG). The segment covering 162 to 171 (LDEKEGEKSR) has biased composition (basic and acidic residues). A compositionally biased stretch (polar residues) spans 172–183 (SQSSPPACSQGS). Over residues 274-283 (EEPEQEEEDL) the composition is skewed to acidic residues. S290 carries the phosphoserine modification.

In terms of assembly, interacts with CLCNK channels. Forms heteromers with CLCNKA in the thin ascending limb of Henle and with CLCNKB in the thick ascending limb and more distal segments. Post-translationally, palmitoylation is necessary for activation of plasma membrane-inserted CLC-K/barttin channels. As to expression, expressed along the distal nephron.

It is found in the basolateral cell membrane. Functionally, regulatory subunit of anion-selective CLCNKA:BSND and CLCNKB:BSND heteromeric channels involved in basolateral chloride conductance along the nephron to achieve urine concentration and maintain systemic acid-base homeostasis, and in the stria vascularis of the inner ear to establish the endocochlear potential necessary for normal hearing. Most likely acts as a chaperone that allosterically regulates proper sorting of CLCNKA:BSND and CLCNKB:BSND channels at the basolateral plasma membrane domain and functional switch to ion conducting state. Mediates constitutive opening of channel common gates. This chain is Barttin, found in Rattus norvegicus (Rat).